Reading from the N-terminus, the 519-residue chain is Protein disulfide-isomerase A5 (519 aa).

The first 21 residues, 1–21 (MARAGPAWLLLAIWVVLPSWL), serve as a signal peptide directing secretion. Disulfide bonds link C85/C94, C182/C185, C305/C308, and C426/C429. Thioredoxin domains lie at 134–261 (FLKD…NPQP), 270–384 (PWAD…NPEA), and 378–506 (WMQN…ALRE). The Prevents secretion from ER motif lies at 516–519 (KEEL).

The protein belongs to the protein disulfide isomerase family. As to quaternary structure, interacts with CALR (via P-domain).

It localises to the endoplasmic reticulum lumen. It carries out the reaction Catalyzes the rearrangement of -S-S- bonds in proteins.. This chain is Protein disulfide-isomerase A5 (PDIA5), found in Homo sapiens (Human).